Reading from the N-terminus, the 151-residue chain is Protein A151R (151 aa).

Belongs to the asfivirus A151R family. In terms of assembly, monomer. Homodimer. Interacts with protein B119L. Interacts with membrane protein E248R. Requires Zn(2+) as cofactor.

Functionally, may participate in a redox cascade for the formation of disulfide bonds in viral proteins. The chain is Protein A151R from Ornithodoros (relapsing fever ticks).